The sequence spans 944 residues: Neutral alpha-glucosidase AB (944 aa).

Residues M1–G28 form the signal peptide. C41 and C47 form a disulfide bridge. Residue S52 is modified to Phosphoserine. The N-linked (GlcNAc...) asparagine glycan is linked to N97. Positions Q181 to P238 are disordered. The span at E203–S236 shows a compositional bias: basic and acidic residues. Residues D283 and D429 each coordinate substrate. D542 acts as the Nucleophile in catalysis. R602 provides a ligand contact to substrate. The Proton donor role is filled by D618. An intrachain disulfide couples C633 to C644. H676 contacts substrate.

The protein belongs to the glycosyl hydrolase 31 family. In terms of assembly, heterodimer of a catalytic alpha subunit (GANAB) and a beta subunit (PRKCSH). Binds glycosylated PTPRC. In terms of tissue distribution, detected in placenta. Isoform 1 and isoform 2 are expressed in the kidney and liver.

The protein localises to the endoplasmic reticulum. The protein resides in the golgi apparatus. Its subcellular location is the melanosome. The enzyme catalyses N(4)-(alpha-D-Glc-(1-&gt;3)-alpha-D-Man-(1-&gt;2)-alpha-D-Man-(1-&gt;2)-alpha-D-Man-(1-&gt;3)-[alpha-D-Man-(1-&gt;2)-alpha-D-Man-(1-&gt;3)-[alpha-D-Man-(1-&gt;2)-alpha-D-Man-(1-&gt;6)]-alpha-D-Man-(1-&gt;6)]-beta-D-Man-(1-&gt;4)-beta-D-GlcNAc-(1-&gt;4)-beta-D-GlcNAc)-L-asparaginyl-[protein] + H2O = N(4)-(alpha-D-Man-(1-&gt;2)-alpha-D-Man-(1-&gt;2)-alpha-D-Man-(1-&gt;3)-[alpha-D-Man-(1-&gt;2)-alpha-D-Man-(1-&gt;3)-[alpha-D-Man-(1-&gt;2)-alpha-D-Man-(1-&gt;6)]-alpha-D-Man-(1-&gt;6)]-beta-D-Man-(1-&gt;4)-beta-D-GlcNAc-(1-&gt;4)-beta-D-GlcNAc)-L-asparaginyl-[protein] (N-glucan mannose isomer 9A1,2,3B1,2,3) + beta-D-glucose. It catalyses the reaction N(4)-(alpha-D-Glc-(1-&gt;3)-alpha-D-Glc-(1-&gt;3)-alpha-D-Man-(1-&gt;2)-alpha-D-Man-(1-&gt;2)-alpha-D-Man-(1-&gt;3)-[alpha-D-Man-(1-&gt;2)-alpha-D-Man-(1-&gt;3)-[alpha-D-Man-(1-&gt;2)-alpha-D-Man-(1-&gt;6)]-alpha-D-Man-(1-&gt;6)]-beta-D-Man-(1-&gt;4)-beta-D-GlcNAc-(1-&gt;4)-beta-D-GlcNAc)-L-asparaginyl-[protein] + H2O = N(4)-(alpha-D-Glc-(1-&gt;3)-alpha-D-Man-(1-&gt;2)-alpha-D-Man-(1-&gt;2)-alpha-D-Man-(1-&gt;3)-[alpha-D-Man-(1-&gt;2)-alpha-D-Man-(1-&gt;3)-[alpha-D-Man-(1-&gt;2)-alpha-D-Man-(1-&gt;6)]-alpha-D-Man-(1-&gt;6)]-beta-D-Man-(1-&gt;4)-beta-D-GlcNAc-(1-&gt;4)-beta-D-GlcNAc)-L-asparaginyl-[protein] + beta-D-glucose. Its pathway is glycan metabolism; N-glycan metabolism. Inhibited by deoxynojirimycin. Catalytic subunit of glucosidase II that cleaves sequentially the 2 innermost alpha-1,3-linked glucose residues from the Glc(2)Man(9)GlcNAc(2) oligosaccharide precursor of immature glycoproteins. Required for PKD1/Polycystin-1 and PKD2/Polycystin-2 maturation and localization to the cell surface and cilia. This Homo sapiens (Human) protein is Neutral alpha-glucosidase AB.